The following is a 221-amino-acid chain: uncharacterized protein (221 aa).

A compositionally biased stretch (basic residues) spans 1–11 (MGEKSRRKGPA). 2 disordered regions span residues 1–23 (MGEK…GRTC) and 139–169 (SNFQ…SAPE). 2 stretches are compositionally biased toward basic and acidic residues: residues 13 to 23 (RHADGKLGRTC) and 155 to 168 (DKRS…RSAP).

This is an uncharacterized protein from Homo sapiens (Human).